A 416-amino-acid chain; its full sequence is CinA-like protein (416 aa).

Belongs to the CinA family.

The protein is CinA-like protein of Thermosynechococcus vestitus (strain NIES-2133 / IAM M-273 / BP-1).